A 187-amino-acid polypeptide reads, in one-letter code: uncharacterized protein (187 aa).

A run of 4 helical transmembrane segments spans residues 29–50 (IFID…VYWI), 70–92 (FVIG…INAY), 128–147 (IFFA…SVLR), and 154–176 (LALV…ISYL).

Its subcellular location is the cell membrane. This is an uncharacterized protein from Archaeoglobus fulgidus (strain ATCC 49558 / DSM 4304 / JCM 9628 / NBRC 100126 / VC-16).